Consider the following 413-residue polypeptide: Type II methyltransferase M.NaeI (413 aa).

The SAM-dependent MTase C5-type domain maps to leucine 4–glutamate 317. Cysteine 78 is a catalytic residue.

Belongs to the class I-like SAM-binding methyltransferase superfamily. C5-methyltransferase family.

It carries out the reaction a 2'-deoxycytidine in DNA + S-adenosyl-L-methionine = a 5-methyl-2'-deoxycytidine in DNA + S-adenosyl-L-homocysteine + H(+). Its function is as follows. A methylase that recognizes the double-stranded sequence 5'-GCCGGC-3', methylates C-? on both strands, and protects the DNA from cleavage by the NaeI endonuclease. This is Type II methyltransferase M.NaeI from Lentzea aerocolonigenes (Lechevalieria aerocolonigenes).